A 223-amino-acid polypeptide reads, in one-letter code: Small ribosomal subunit protein uS3 (223 aa).

The KH type-2 domain maps to 38-106; sequence IREFIAKQLT…RVHINIVEIK (69 aa).

Belongs to the universal ribosomal protein uS3 family. As to quaternary structure, part of the 30S ribosomal subunit. Forms a tight complex with proteins S10 and S14.

Its function is as follows. Binds the lower part of the 30S subunit head. Binds mRNA in the 70S ribosome, positioning it for translation. This Pediococcus pentosaceus (strain ATCC 25745 / CCUG 21536 / LMG 10740 / 183-1w) protein is Small ribosomal subunit protein uS3.